The following is a 758-amino-acid chain: Probable TonB-dependent receptor NMB0964 (758 aa).

Positions Met-1–Ala-24 are cleaved as a signal peptide. The 112-residue stretch at Leu-50 to Gly-161 folds into the TBDR plug domain. Residues Gly-171–Phe-758 form the TBDR beta-barrel domain. The TonB C-terminal box signature appears at Ser-741–Phe-758.

The protein belongs to the TonB-dependent receptor family.

It localises to the cell outer membrane. In terms of biological role, probable receptor, TonB-dependent. In Neisseria meningitidis serogroup B (strain ATCC BAA-335 / MC58), this protein is Probable TonB-dependent receptor NMB0964.